A 472-amino-acid polypeptide reads, in one-letter code: Homeobox protein PKNOX2 (472 aa).

The segment at 1–62 is disordered; that stretch reads MMQHASPAPA…STPVPSAPID (62 aa). Polar residues predominate over residues 26–38; sequence DSPQMTATAQPPS. Over residues 46 to 56 the composition is skewed to low complexity; sequence SAPSAAASTPV. Residues 96–179 enclose the MEIS N-terminal domain; that stretch reads GSECITSASF…MHSDNLLRND (84 aa). Residues 291-350 constitute a DNA-binding region (homeobox); that stretch reads KRGVLPKHATNIMRSWLFQHLMHPYPTEDEKRQIAAQTNLTLLQVNNWFINARRRILQPM. Disordered stretches follow at residues 351 to 371, 386 to 405, and 422 to 472; these read LDASNPDPAPKAKKIKSQHRP, QQQGGAPGTNPDGSINLDNL, and MAAH…DSLE. The span at 361–371 shows a compositional bias: basic residues; the sequence is KAKKIKSQHRP. Residues 429-454 are compositionally biased toward acidic residues; sequence LDGTEEEDEDEMEEEEEEELEEEVDE.

The protein belongs to the TALE/MEIS homeobox family.

It is found in the nucleus. The chain is Homeobox protein PKNOX2 (PKNOX2) from Homo sapiens (Human).